The following is a 567-amino-acid chain: Type II secretion system protein E (567 aa).

325–332 (GPTGSGKT) provides a ligand contact to ATP.

The protein belongs to the GSP E family. As to quaternary structure, forms homooligomers; most probably hexamers. Interacts with XpsL/GspL.

The protein resides in the cell inner membrane. It carries out the reaction ATP + H2O + cellular proteinSide 1 = ADP + phosphate + cellular proteinSide 2.. ATPase component of the type II secretion system required for the energy-dependent secretion of extracellular factors such as proteases and toxins from the periplasm. Acts as a molecular motor to provide the energy that is required for assembly of the pseudopilus and the extrusion of substrates generated in the cytoplasm. This Xanthomonas campestris pv. campestris (strain ATCC 33913 / DSM 3586 / NCPPB 528 / LMG 568 / P 25) protein is Type II secretion system protein E (xpsE).